We begin with the raw amino-acid sequence, 270 residues long: Flavin-dependent thymidylate synthase (270 aa).

The ThyX domain occupies 13–218 (GFVRLVDQMG…PLAWAAFEEH (206 aa)). Residues Ser59, 82 to 84 (RHR), and Glu90 each bind FAD. Residues 79–82 (QWFR), 90–94 (EISGR), and Arg157 contribute to the dUMP site. The short motif at 82-92 (RHRTASVNEIS) is the ThyX motif element. FAD-binding positions include 173–175 (DLH) and His179. Residue Arg184 coordinates dUMP. Arg184 acts as the Involved in ionization of N3 of dUMP, leading to its activation in catalysis.

It belongs to the thymidylate synthase ThyX family. In terms of assembly, homotetramer. It depends on FAD as a cofactor.

It carries out the reaction dUMP + (6R)-5,10-methylene-5,6,7,8-tetrahydrofolate + NADPH + H(+) = dTMP + (6S)-5,6,7,8-tetrahydrofolate + NADP(+). Its pathway is pyrimidine metabolism; dTTP biosynthesis. Its function is as follows. Catalyzes the reductive methylation of 2'-deoxyuridine-5'-monophosphate (dUMP) to 2'-deoxythymidine-5'-monophosphate (dTMP) while utilizing 5,10-methylenetetrahydrofolate (mTHF) as the methyl donor, and NADPH and FADH(2) as the reductant. The polypeptide is Flavin-dependent thymidylate synthase (Thermus thermophilus (strain ATCC BAA-163 / DSM 7039 / HB27)).